Here is a 566-residue protein sequence, read N- to C-terminus: Arginine--tRNA ligase (566 aa).

A 'HIGH' region motif is present at residues 121–131 (ANPNGPFHIGH).

The protein belongs to the class-I aminoacyl-tRNA synthetase family.

The protein resides in the cytoplasm. The enzyme catalyses tRNA(Arg) + L-arginine + ATP = L-arginyl-tRNA(Arg) + AMP + diphosphate. The chain is Arginine--tRNA ligase from Methanococcus maripaludis (strain C7 / ATCC BAA-1331).